The primary structure comprises 313 residues: MNGVWIEVRVITSCEAIEPISGIFYGLNSQGVAVEDPNDLLTRDQGPLTWDFADINVLEHKGEFAVVKAYFSGDDDLEKIVSITKEKVKEIQEMGIDIGKGIVECDKIKEEDWANNWKKYYKPSNITDRIVVKPMWEEYSPKNEELVIELDPGMAFGTGTHETTRMCVKALEKYVEHDSTVFDVGCGSGILAIAAAKLGAKLALGVDLDPVAVESAKENVGLNDLDNIEILEGNLLDVIDGKADIVVANIIAEIICILTDDVSKALNKGGLFITSGIIHERVDMVTSKLDECGFEVMEVNKDGEWNCIVAKLK.

Residues threonine 164, glycine 185, aspartate 207, and asparagine 249 each coordinate S-adenosyl-L-methionine.

The protein belongs to the methyltransferase superfamily. PrmA family.

It localises to the cytoplasm. It carries out the reaction L-lysyl-[protein] + 3 S-adenosyl-L-methionine = N(6),N(6),N(6)-trimethyl-L-lysyl-[protein] + 3 S-adenosyl-L-homocysteine + 3 H(+). Its function is as follows. Methylates ribosomal protein L11. The chain is Ribosomal protein L11 methyltransferase from Clostridium botulinum (strain Eklund 17B / Type B).